The following is a 170-amino-acid chain: Probable T4-type lysozyme 2 (170 aa).

Catalysis depends on E13, which acts as the Proton donor. The active-site Nucleophile is the D22.

Belongs to the glycosyl hydrolase 24 family.

The catalysed reaction is Hydrolysis of (1-&gt;4)-beta-linkages between N-acetylmuramic acid and N-acetyl-D-glucosamine residues in a peptidoglycan and between N-acetyl-D-glucosamine residues in chitodextrins.. The polypeptide is Probable T4-type lysozyme 2 (Dictyostelium discoideum (Social amoeba)).